Reading from the N-terminus, the 302-residue chain is Sulfate adenylyltransferase subunit 2 (302 aa).

The tract at residues 280–302 (RQGRLIDSDQSASMEQKKRQGYF) is disordered.

The protein belongs to the PAPS reductase family. CysD subfamily. As to quaternary structure, heterodimer composed of CysD, the smaller subunit, and CysN.

The catalysed reaction is sulfate + ATP + H(+) = adenosine 5'-phosphosulfate + diphosphate. It participates in sulfur metabolism; hydrogen sulfide biosynthesis; sulfite from sulfate: step 1/3. Its function is as follows. With CysN forms the ATP sulfurylase (ATPS) that catalyzes the adenylation of sulfate producing adenosine 5'-phosphosulfate (APS) and diphosphate, the first enzymatic step in sulfur assimilation pathway. APS synthesis involves the formation of a high-energy phosphoric-sulfuric acid anhydride bond driven by GTP hydrolysis by CysN coupled to ATP hydrolysis by CysD. This is Sulfate adenylyltransferase subunit 2 from Shewanella baltica (strain OS195).